The following is an 84-amino-acid chain: Alpha-mammal toxin Ts2 (84 aa).

The N-terminal stretch at methionine 1–glycine 20 is a signal peptide. In terms of domain architecture, LCN-type CS-alpha/beta spans lysine 21–glycine 83. 4 disulfides stabilise this stretch: cysteine 31–cysteine 82, cysteine 35–cysteine 58, cysteine 43–cysteine 63, and cysteine 47–cysteine 65. Cysteine 82 is subject to Cysteine amide.

This sequence belongs to the long (4 C-C) scorpion toxin superfamily. Sodium channel inhibitor family. Beta subfamily. As to expression, expressed by the venom gland.

The protein localises to the secreted. In terms of biological role, alpha toxins bind voltage-independently at site-3 of sodium channels (Nav) and inhibit the inactivation of the activated channels, thereby blocking neuronal transmission. This toxin acts on Nav1.2/SCN2A, Nav1.3/SCN3A, Nav1.5/SCN5A, Nav1.6/SCN8A and Nav1.7/SCN9A voltage-gated sodium channels, with the highest affinity for Nav1.3/SCN3A, followed by Nav1.6/SCN8A and Nav1.7/SCN9A which are affected almost equally. Interestingly, shows a significant shift of the voltage dependence of activation for Nav1.3/SCN3A that is characteristic of beta-toxins. In addition, in presence of LPS, this toxin inhibits the release of NO, IL-6 and TNF-alpha in J774.1 cells. Further, in the absence of LPS, it stimulates the production of the anti-inflammatory cytokine IL-10. This toxin is active on mammals. The polypeptide is Alpha-mammal toxin Ts2 (Tityus serrulatus (Brazilian scorpion)).